A 460-amino-acid polypeptide reads, in one-letter code: MTLTAAIVLAAGEGTRMRSRKPKVLHEFAGKTFLNRVMDAVGALDPETLAVVVRYQAQRVAEAARSYDDAVLIVEQDEIPGTGRAVQCAMEQLGEQGPLSGTVLITASDMPLLDTSTLKQLLDYHRDSGDGATVLTTVLDDPTGYGRIIRDADGNVLKIVEQKDGNSSELAVREVNTSVYVFDAAVLEQAIANLNADNAQGEFYLTDALTVARQVSKVGAFAAPDPLSVEGVNDRVQLASLAKAHNLRVCRQWMLDGVTIVDPQTTWIEDEVEMESDAVILPGCFLQGHTTIAHDAVVGPYTTLIDATVEPEAHVERSRVQESRIGREANIGPWTYLRPGNEIGTGSKAGAFVEMKKAHIGDGSKVPHLSYVGDADLGENTNIGGGTITANYDGVHKNHTHIGSDVHIGAGNLFVAPVNVGDGVTSGAGSVIRHDVPGDAMVYSENTQHVVDNWKPAWER.

The pyrophosphorylase stretch occupies residues 1–235 (MTLTAAIVLA…PLSVEGVNDR (235 aa)). Residues 9–12 (LAAG), Lys23, Gln76, and 81–82 (GT) each bind UDP-N-acetyl-alpha-D-glucosamine. Asp109 contacts Mg(2+). Positions 146, 161, 176, and 233 each coordinate UDP-N-acetyl-alpha-D-glucosamine. Position 233 (Asn233) interacts with Mg(2+). A linker region spans residues 236–256 (VQLASLAKAHNLRVCRQWMLD). The tract at residues 257 to 460 (GVTIVDPQTT…VDNWKPAWER (204 aa)) is N-acetyltransferase. Positions 338 and 356 each coordinate UDP-N-acetyl-alpha-D-glucosamine. The Proton acceptor role is filled by His368. The UDP-N-acetyl-alpha-D-glucosamine site is built by Tyr371 and Asn382. Residues 391-392 (NY) and Ala428 each bind acetyl-CoA.

In the N-terminal section; belongs to the N-acetylglucosamine-1-phosphate uridyltransferase family. The protein in the C-terminal section; belongs to the transferase hexapeptide repeat family. In terms of assembly, homotrimer. Mg(2+) serves as cofactor.

It localises to the cytoplasm. It carries out the reaction alpha-D-glucosamine 1-phosphate + acetyl-CoA = N-acetyl-alpha-D-glucosamine 1-phosphate + CoA + H(+). It catalyses the reaction N-acetyl-alpha-D-glucosamine 1-phosphate + UTP + H(+) = UDP-N-acetyl-alpha-D-glucosamine + diphosphate. It participates in nucleotide-sugar biosynthesis; UDP-N-acetyl-alpha-D-glucosamine biosynthesis; N-acetyl-alpha-D-glucosamine 1-phosphate from alpha-D-glucosamine 6-phosphate (route II): step 2/2. It functions in the pathway nucleotide-sugar biosynthesis; UDP-N-acetyl-alpha-D-glucosamine biosynthesis; UDP-N-acetyl-alpha-D-glucosamine from N-acetyl-alpha-D-glucosamine 1-phosphate: step 1/1. The protein operates within bacterial outer membrane biogenesis; LPS lipid A biosynthesis. Catalyzes the last two sequential reactions in the de novo biosynthetic pathway for UDP-N-acetylglucosamine (UDP-GlcNAc). The C-terminal domain catalyzes the transfer of acetyl group from acetyl coenzyme A to glucosamine-1-phosphate (GlcN-1-P) to produce N-acetylglucosamine-1-phosphate (GlcNAc-1-P), which is converted into UDP-GlcNAc by the transfer of uridine 5-monophosphate (from uridine 5-triphosphate), a reaction catalyzed by the N-terminal domain. This chain is Bifunctional protein GlmU, found in Bifidobacterium animalis subsp. lactis (strain AD011).